Consider the following 422-residue polypeptide: Ubiquitin-conjugating enzyme E2 Q1 (422 aa).

The residue at position 1 (Met1) is an N-acetylmethionine. Residues 1–15 (MQQPQPQGQQQPGPG) are compositionally biased toward low complexity. Disordered stretches follow at residues 1–40 (MQQP…PGPC) and 174–221 (PLPA…EDDG). Residues 16–35 (QQLGGQGAAPGAGGGPGGGP) show a composition bias toward gly residues. A compositionally biased stretch (acidic residues) spans 185–200 (VSSEDEDEEMPEDTED). Over residues 212 to 221 (AEGKKSEDDG) the composition is skewed to basic and acidic residues. The 165-residue stretch at 251-415 (QATDRLMKEL…VQIHEKNGWY (165 aa)) folds into the UBC core domain. Residue Cys351 is the Glycyl thioester intermediate of the active site.

It belongs to the ubiquitin-conjugating enzyme family. As to quaternary structure, monomer and homodimer. Only the homodimer is linked to ubiquitin through thiolester activation. Interacts (via N-terminus) with B4GALT1 (via N-terminal cytoplasmic domain). The interaction is direct. In terms of processing, autoubiquitinated in vitro in the presence of NEDD4L. Widely expressed.

It is found in the nucleus. Its subcellular location is the cell projection. It localises to the filopodium. The protein localises to the cytoplasm. The protein resides in the cytosol. The catalysed reaction is S-ubiquitinyl-[E1 ubiquitin-activating enzyme]-L-cysteine + [E2 ubiquitin-conjugating enzyme]-L-cysteine = [E1 ubiquitin-activating enzyme]-L-cysteine + S-ubiquitinyl-[E2 ubiquitin-conjugating enzyme]-L-cysteine.. The protein operates within protein modification; protein ubiquitination. Functionally, catalyzes the covalent attachment of ubiquitin to other proteins. May be involved in hormonal homeostasis in females. Involved in regulation of B4GALT1 cell surface expression, B4GALT1-mediated cell adhesion to laminin and embryoid body formation. In Homo sapiens (Human), this protein is Ubiquitin-conjugating enzyme E2 Q1 (UBE2Q1).